A 132-amino-acid polypeptide reads, in one-letter code: Large ribosomal subunit protein uL14 (132 aa).

This sequence belongs to the universal ribosomal protein uL14 family. In terms of assembly, part of the 50S ribosomal subunit. Forms a cluster with proteins L3 and L24e, part of which may contact the 16S rRNA in 2 intersubunit bridges.

Binds to 23S rRNA. Forms part of two intersubunit bridges in the 70S ribosome. This chain is Large ribosomal subunit protein uL14, found in Methanosphaera stadtmanae (strain ATCC 43021 / DSM 3091 / JCM 11832 / MCB-3).